The sequence spans 145 residues: Thioredoxin C-3 (145 aa).

3 residues coordinate heme: Cys25, Cys28, and His29. Positions His29–Gln140 constitute a Thioredoxin domain. The cysteines at positions 65 and 68 are disulfide-linked.

This sequence belongs to the thioredoxin family.

Participates in various redox reactions through the reversible oxidation of its active center dithiol to a disulfide and catalyzes dithiol-disulfide exchange reactions. This Corynebacterium nephridii protein is Thioredoxin C-3.